The chain runs to 306 residues: uncharacterized protein (306 aa).

This is an uncharacterized protein from Escherichia coli (strain K12).